The following is a 211-amino-acid chain: MWWTPIPEDIVRDPAAFRVGRLTKAHGLKGAVKLELFTDDPDKRFVPGAEFSLQVPDSSPWHGRTLTLTELRWYNSHPVGFFEGVADRTAAESLAKAILWMTPPADEPAEPDAWYDHQLVGLKVLRDGVEVGTVSLVDHFPAQDLLHVDTPSGTVLVPFVQAIVPSVDVEAGTLVITPPLGLFEEIPDEQPTPSATSDAEPGSAPEGDDAR.

In terms of domain architecture, PRC barrel spans 111 to 182 (PDAWYDHQLV…TLVITPPLGL (72 aa)). The interval 184–211 (EEIPDEQPTPSATSDAEPGSAPEGDDAR) is disordered.

The protein belongs to the RimM family. As to quaternary structure, binds ribosomal protein uS19.

It is found in the cytoplasm. In terms of biological role, an accessory protein needed during the final step in the assembly of 30S ribosomal subunit, possibly for assembly of the head region. Essential for efficient processing of 16S rRNA. May be needed both before and after RbfA during the maturation of 16S rRNA. It has affinity for free ribosomal 30S subunits but not for 70S ribosomes. This Clavibacter sepedonicus (Clavibacter michiganensis subsp. sepedonicus) protein is Ribosome maturation factor RimM.